Consider the following 230-residue polypeptide: Acyl-protein thioesterase 1 (230 aa).

Catalysis depends on charge relay system residues Ser-119, Asp-174, and His-208. Lys-224 is modified (N6-acetyllysine).

The protein belongs to the AB hydrolase superfamily. AB hydrolase 2 family. As to quaternary structure, homodimer. As to expression, ubiquitous. Detected at low levels in all tissues tested.

It localises to the cytoplasm. The protein localises to the cell membrane. The protein resides in the nucleus membrane. It is found in the endoplasmic reticulum. The catalysed reaction is S-hexadecanoyl-L-cysteinyl-[protein] + H2O = L-cysteinyl-[protein] + hexadecanoate + H(+). It catalyses the reaction 1-hexadecanoyl-sn-glycero-3-phosphocholine + H2O = sn-glycerol 3-phosphocholine + hexadecanoate + H(+). It carries out the reaction a 1-(9Z-octadecenoyl)-2-acyl-sn-glycero-3-phosphocholine + H2O = a 2-acyl-sn-glycero-3-phosphocholine + (9Z)-octadecenoate + H(+). Acts as an acyl-protein thioesterase. Hydrolyzes fatty acids from S-acylated cysteine residues in proteins such as trimeric G alpha proteins or HRAS. Acts as a palmitoyl thioesterase that catalyzes depalmitoylation of proteins, such as ADRB2, KCNMA1 and SQSTM1. Acts as a negative regulator of autophagy by mediating palmitoylation of SQSTM1, decreasing affinity between SQSTM1 and ATG8 proteins and recruitment of ubiquitinated cargo proteins to autophagosomes. Acts as a lysophospholipase and hydrolyzes lysophosphatidylcholine (lyso-PC). Also hydrolyzes lysophosphatidylethanolamine (lyso-PE), lysophosphatidylinositol (lyso-PI) and lysophosphatidylserine (lyso-PS). Has much higher thioesterase activity than lysophospholipase activity. Contributes to the production of lysophosphatidic acid (LPA) during blood coagulation by recognizing and cleaving plasma phospholipids to generate lysophospholipids which in turn act as substrates for ENPP2 to produce LPA. The chain is Acyl-protein thioesterase 1 (Lypla1) from Rattus norvegicus (Rat).